Reading from the N-terminus, the 194-residue chain is Mitochondrial import inner membrane translocase subunit Tim22 (194 aa).

2 disulfides stabilise this stretch: cysteine 69–cysteine 141 and cysteine 160–cysteine 179. Helical transmembrane passes span 74-94, 123-143, and 170-190; these read ALACVGGFVLGGAFGVFTAGI, MSYAKNFAIVGAMFSCTECLV, and AGLKAGVIGCGGFAAFSAAID.

This sequence belongs to the Tim17/Tim22/Tim23 family. As to quaternary structure, component of the TIM22 complex, whose core is composed of TIMM22, associated with peripheral protein FXC1/TIMM10B and the 70 kDa heterohexamer. In most cases, the 70 kDa complex is composed of TIMM9 and TIMM10 (TIMM10A or TIMM10B). A small fraction of the 70 kDa complex is composed of TIMM8 (TIMM8A/DDP1 or TIMM8B/DDP2) and TIMM13. The TIM22 complex also contains AGK and TIMM29. Interacts directly with TIMM9, TIMM10A and FXC1/TIMM10B. Interacts (when oxidized) with TIMM29; interaction is direct. Post-translationally, disulfide bonds promote efficient assembly of the TIM22 complex.

The protein resides in the mitochondrion inner membrane. Its function is as follows. Essential core component of the TIM22 complex, a complex that mediates the import and insertion of multi-pass transmembrane proteins into the mitochondrial inner membrane. In the TIM22 complex, it constitutes the voltage-activated and signal-gated channel. Forms a twin-pore translocase that uses the membrane potential as external driving force in 2 voltage-dependent steps. The sequence is that of Mitochondrial import inner membrane translocase subunit Tim22 (TIMM22) from Bos taurus (Bovine).